A 269-amino-acid polypeptide reads, in one-letter code: Hydroxyethylthiazole kinase (269 aa).

A substrate-binding site is contributed by methionine 46. Positions 121 and 166 each coordinate ATP. Residue glycine 193 participates in substrate binding.

Belongs to the Thz kinase family. Mg(2+) serves as cofactor.

The enzyme catalyses 5-(2-hydroxyethyl)-4-methylthiazole + ATP = 4-methyl-5-(2-phosphooxyethyl)-thiazole + ADP + H(+). It functions in the pathway cofactor biosynthesis; thiamine diphosphate biosynthesis; 4-methyl-5-(2-phosphoethyl)-thiazole from 5-(2-hydroxyethyl)-4-methylthiazole: step 1/1. In terms of biological role, catalyzes the phosphorylation of the hydroxyl group of 4-methyl-5-beta-hydroxyethylthiazole (THZ). The polypeptide is Hydroxyethylthiazole kinase (Limosilactobacillus reuteri (strain DSM 20016) (Lactobacillus reuteri)).